The primary structure comprises 491 residues: Lysine--tRNA ligase (491 aa).

Mg(2+) is bound by residues glutamate 399 and glutamate 406.

It belongs to the class-II aminoacyl-tRNA synthetase family. Homodimer. It depends on Mg(2+) as a cofactor.

Its subcellular location is the cytoplasm. The catalysed reaction is tRNA(Lys) + L-lysine + ATP = L-lysyl-tRNA(Lys) + AMP + diphosphate. This Chloroflexus aurantiacus (strain ATCC 29366 / DSM 635 / J-10-fl) protein is Lysine--tRNA ligase.